The primary structure comprises 185 residues: Ribosome-recycling factor (185 aa).

A disordered region spans residues 136–155; the sequence is NDDLKKLEKNGDITEDELRA.

The protein belongs to the RRF family.

The protein localises to the cytoplasm. In terms of biological role, responsible for the release of ribosomes from messenger RNA at the termination of protein biosynthesis. May increase the efficiency of translation by recycling ribosomes from one round of translation to another. The sequence is that of Ribosome-recycling factor from Bacillus velezensis (strain DSM 23117 / BGSC 10A6 / LMG 26770 / FZB42) (Bacillus amyloliquefaciens subsp. plantarum).